The primary structure comprises 456 residues: Gamma-glutamyl phosphate reductase (456 aa).

It belongs to the gamma-glutamyl phosphate reductase family.

It localises to the cytoplasm. It carries out the reaction L-glutamate 5-semialdehyde + phosphate + NADP(+) = L-glutamyl 5-phosphate + NADPH + H(+). Its pathway is amino-acid biosynthesis; L-proline biosynthesis; L-glutamate 5-semialdehyde from L-glutamate: step 2/2. In terms of biological role, catalyzes the NADPH-dependent reduction of L-glutamate 5-phosphate into L-glutamate 5-semialdehyde and phosphate. The product spontaneously undergoes cyclization to form 1-pyrroline-5-carboxylate. In Haloquadratum walsbyi (strain DSM 16790 / HBSQ001), this protein is Gamma-glutamyl phosphate reductase.